Reading from the N-terminus, the 430-residue chain is Serine--tRNA ligase (430 aa).

237-239 contacts L-serine; sequence TAE. Residue 268–270 coordinates ATP; the sequence is RAE. Glutamate 291 is a binding site for L-serine. An ATP-binding site is contributed by 355–358; the sequence is EVSS. Residue serine 391 participates in L-serine binding.

It belongs to the class-II aminoacyl-tRNA synthetase family. Type-1 seryl-tRNA synthetase subfamily. In terms of assembly, homodimer. The tRNA molecule binds across the dimer.

The protein resides in the cytoplasm. The enzyme catalyses tRNA(Ser) + L-serine + ATP = L-seryl-tRNA(Ser) + AMP + diphosphate + H(+). The catalysed reaction is tRNA(Sec) + L-serine + ATP = L-seryl-tRNA(Sec) + AMP + diphosphate + H(+). It participates in aminoacyl-tRNA biosynthesis; selenocysteinyl-tRNA(Sec) biosynthesis; L-seryl-tRNA(Sec) from L-serine and tRNA(Sec): step 1/1. Functionally, catalyzes the attachment of serine to tRNA(Ser). Is also able to aminoacylate tRNA(Sec) with serine, to form the misacylated tRNA L-seryl-tRNA(Sec), which will be further converted into selenocysteinyl-tRNA(Sec). The chain is Serine--tRNA ligase from Baumannia cicadellinicola subsp. Homalodisca coagulata.